A 347-amino-acid chain; its full sequence is MLHTTQLYQHVPETRWPIVYSPRYNITFMGLEKLHPFDAGKWGKVINFLKEEKLLSDSMLVEAREASEEDLLVVHTRRYLNELKWSFAVATITEIPPVIFLPNFLVQRKVLRPLRTQTGGTIMAGKLAVERGWAINVGGGFHHCSSDRGGGFCAYADITLAIKFLFERVEGISRATIIDLDAHQGNGHERDFMDDKRVYIMDVYNRHIYPGDRFAKQAIRRKVELEWGTEDDEYLDKVERNIEKSLQEHLPDVVVYNAGTDILEGDRLGGLSISPAGIVKRDELVFRMVRGRHVPILMVTSGGYQKRTARIIADSILNLFGLGLIGPESPSISAQNSDTPLLPPAVP.

Residues 14–318 (TRWPIVYSPR…ARIIADSILN (305 aa)) are histone deacetylase. His-143 is a catalytic residue.

This sequence belongs to the histone deacetylase family. Interacts with HDAC6.

The protein localises to the nucleus. The enzyme catalyses N(6)-acetyl-L-lysyl-[histone] + H2O = L-lysyl-[histone] + acetate. In terms of biological role, responsible for the deacetylation of lysine residues on the N-terminal part of the core histones (H2A, H2B, H3 and H4). Histone deacetylation gives a tag for epigenetic repression and plays an important role in transcriptional regulation, cell cycle progression and developmental events. Histone deacetylases act via the formation of large multiprotein complexes. This Macaca fascicularis (Crab-eating macaque) protein is Histone deacetylase 11 (HDAC11).